Reading from the N-terminus, the 159-residue chain is Ribosomal RNA large subunit methyltransferase H (159 aa).

Residues Leu-76, Gly-108, and 127 to 132 (FGRLTL) contribute to the S-adenosyl-L-methionine site.

The protein belongs to the RNA methyltransferase RlmH family. In terms of assembly, homodimer.

It localises to the cytoplasm. It carries out the reaction pseudouridine(1915) in 23S rRNA + S-adenosyl-L-methionine = N(3)-methylpseudouridine(1915) in 23S rRNA + S-adenosyl-L-homocysteine + H(+). In terms of biological role, specifically methylates the pseudouridine at position 1915 (m3Psi1915) in 23S rRNA. The chain is Ribosomal RNA large subunit methyltransferase H from Listeria monocytogenes serotype 4b (strain CLIP80459).